A 312-amino-acid polypeptide reads, in one-letter code: Porphobilinogen deaminase (312 aa).

Residue Cys-241 is modified to S-(dipyrrolylmethanemethyl)cysteine.

It belongs to the HMBS family. In terms of assembly, monomer. The cofactor is dipyrromethane.

It catalyses the reaction 4 porphobilinogen + H2O = hydroxymethylbilane + 4 NH4(+). It functions in the pathway porphyrin-containing compound metabolism; protoporphyrin-IX biosynthesis; coproporphyrinogen-III from 5-aminolevulinate: step 2/4. In terms of biological role, tetrapolymerization of the monopyrrole PBG into the hydroxymethylbilane pre-uroporphyrinogen in several discrete steps. The protein is Porphobilinogen deaminase of Pelotomaculum thermopropionicum (strain DSM 13744 / JCM 10971 / SI).